The sequence spans 246 residues: MSKAPTSTNRTGRKIGQKVKKTKLKASSRRWLERHINDPYVQRAKLEGYRARAAFKLLEINDKHQILKGATRIIDLGAAPGSWSQIASKVTDSTEDDIRVAAIDFLEIDPIPGVKILQLDFLDPTAPDQLMEAVGGTPDLVLSDMAAPTTGHQKTDHIRTMHLCEVAADFAVQVLAEGGHFLAKTFQGGTEKALLDMLKKNFKQVLHIKPASSRSESVEMFLLAKHFKGRRHEPAIDADAEESTED.

Residues Gly81, Trp83, Asp104, Asp120, and Asp144 each contribute to the S-adenosyl-L-methionine site. Catalysis depends on Lys184, which acts as the Proton acceptor.

Belongs to the class I-like SAM-binding methyltransferase superfamily. RNA methyltransferase RlmE family.

It localises to the cytoplasm. The catalysed reaction is uridine(2552) in 23S rRNA + S-adenosyl-L-methionine = 2'-O-methyluridine(2552) in 23S rRNA + S-adenosyl-L-homocysteine + H(+). Functionally, specifically methylates the uridine in position 2552 of 23S rRNA at the 2'-O position of the ribose in the fully assembled 50S ribosomal subunit. The chain is Ribosomal RNA large subunit methyltransferase E from Agrobacterium fabrum (strain C58 / ATCC 33970) (Agrobacterium tumefaciens (strain C58)).